The following is a 105-amino-acid chain: MIPGEVQVAAGDIELNVGRETLSVSVANHGDRPVQVGSHYHFFEANDALVFERAPTRGYRLDIPAGTAVRFEPGQARTVQLVAYAGKREVYGFQGKVMGALEGRA.

This sequence belongs to the urease beta subunit family. Heterotrimer of UreA (gamma), UreB (beta) and UreC (alpha) subunits. Three heterotrimers associate to form the active enzyme.

The protein localises to the cytoplasm. The enzyme catalyses urea + 2 H2O + H(+) = hydrogencarbonate + 2 NH4(+). It participates in nitrogen metabolism; urea degradation; CO(2) and NH(3) from urea (urease route): step 1/1. This chain is Urease subunit beta, found in Pseudomonas entomophila (strain L48).